Here is a 377-residue protein sequence, read N- to C-terminus: Putative holocytochrome-c synthase (377 aa).

Disordered stretches follow at residues Met1–Ala29 and Gln111–Gly136. Basic and acidic residues predominate over residues Thr7–Lys22. 2 HRM repeats span residues Glu114–Val119 and Thr124–Asn129.

This sequence belongs to the cytochrome c-type heme lyase family.

It localises to the mitochondrion inner membrane. Its subcellular location is the mitochondrion intermembrane space. It carries out the reaction holo-[cytochrome c] = apo-[cytochrome c] + heme b. Lyase that catalyzes the covalent linking of the heme group to the cytochrome C apoprotein to produce the mature functional cytochrome. The chain is Putative holocytochrome-c synthase from Schizosaccharomyces pombe (strain 972 / ATCC 24843) (Fission yeast).